We begin with the raw amino-acid sequence, 72 residues long: Translation initiation factor IF-1 (72 aa).

One can recognise an S1-like domain in the interval 1-72 (MAKEDNIEMQ…SKGRIVFRSR (72 aa)).

Belongs to the IF-1 family. As to quaternary structure, component of the 30S ribosomal translation pre-initiation complex which assembles on the 30S ribosome in the order IF-2 and IF-3, IF-1 and N-formylmethionyl-tRNA(fMet); mRNA recruitment can occur at any time during PIC assembly.

The protein resides in the cytoplasm. Its function is as follows. One of the essential components for the initiation of protein synthesis. Stabilizes the binding of IF-2 and IF-3 on the 30S subunit to which N-formylmethionyl-tRNA(fMet) subsequently binds. Helps modulate mRNA selection, yielding the 30S pre-initiation complex (PIC). Upon addition of the 50S ribosomal subunit IF-1, IF-2 and IF-3 are released leaving the mature 70S translation initiation complex. The polypeptide is Translation initiation factor IF-1 (Salmonella paratyphi A (strain ATCC 9150 / SARB42)).